Reading from the N-terminus, the 527-residue chain is Tyrosine-protein kinase TXK (527 aa).

Positions 58 to 81 (TQSNRGGVQPSKRKPLPPLPQEPP) are disordered. The 61-residue stretch at 82–142 (DERIQVKALY…PSNYVTENRL (61 aa)) folds into the SH3 domain. At Tyr-91 the chain carries Phosphotyrosine; by autocatalysis. The SH2 domain occupies 150 to 246 (WYHKNITRNQ…GLISRLRYPI (97 aa)). Residues 271 to 527 (LAFVKEIGSG…QVLTEIAETW (257 aa)) enclose the Protein kinase domain. Residues 277–285 (IGSGQFGVV) and Lys-299 contribute to the ATP site. Asp-390 acts as the Proton acceptor in catalysis. Residue Tyr-420 is modified to Phosphotyrosine; by FYN and autocatalysis.

This sequence belongs to the protein kinase superfamily. Tyr protein kinase family. TEC subfamily. As to quaternary structure, interacts with PARP1 and EEF1A1. Interacts with SH2D2A. Interacts with FYN. Post-translationally, phosphorylated at Tyr-420 by FYN. Autophosphorylation at Tyr-91 is critical for the activation of TXK, leading to the up-regulation of IFN-gamma gene transcription. In terms of processing, the cysteine string at the N-terminus is palmitoylated and required for the proper subcellular location. In terms of tissue distribution, expressed in early thymocytes, T-cells and mast cells.

It localises to the cytoplasm. Its subcellular location is the nucleus. The protein resides in the cell membrane. It catalyses the reaction L-tyrosyl-[protein] + ATP = O-phospho-L-tyrosyl-[protein] + ADP + H(+). Activated by phosphorylation by FYN. In terms of biological role, non-receptor tyrosine kinase that plays a redundant role with ITK in regulation of the adaptive immune response. Regulates the development, function and differentiation of conventional T-cells and nonconventional NKT-cells. When antigen presenting cells (APC) activate T-cell receptor (TCR), a series of phosphorylation leads to the recruitment of TXK to the cell membrane, where it is phosphorylated at Tyr-420. Phosphorylation leads to TXK full activation. Also contributes to signaling from many receptors and participates in multiple downstream pathways, including regulation of the actin cytoskeleton. Like ITK, can phosphorylate PLCG1, leading to its localization in lipid rafts and activation, followed by subsequent cleavage of its substrates. In turn, the endoplasmic reticulum releases calcium in the cytoplasm and the nuclear activator of activated T-cells (NFAT) translocates into the nucleus to perform its transcriptional duty. Plays a role in the positive regulation of IFNG transcription in T-helper 1 cells as part of an IFNG promoter-binding complex with PARP1 and EEF1A1. Within the complex, phosphorylates both PARP1 and EEF1A1. Also phosphorylates key sites in LCP2 leading to the up-regulation of Th1 preferred cytokine IL-2. Phosphorylates 'Tyr-201' of CTLA4 which leads to the association of PI-3 kinase with the CTLA4 receptor. This chain is Tyrosine-protein kinase TXK (Txk), found in Mus musculus (Mouse).